The primary structure comprises 690 residues: Methionine--tRNA ligase (690 aa).

The short motif at 20-30 (PYANGSIHLGH) is the 'HIGH' region element. Residues C151, C154, C164, and C167 each contribute to the Zn(2+) site. The 'KMSKS' region motif lies at 337-341 (KMSKS). K340 serves as a coordination point for ATP. Positions 589 to 690 (DFAKVDLRIA…EGAQPGMRVM (102 aa)) constitute a tRNA-binding domain.

Belongs to the class-I aminoacyl-tRNA synthetase family. MetG type 1 subfamily. As to quaternary structure, homodimer. Zn(2+) is required as a cofactor.

Its subcellular location is the cytoplasm. It catalyses the reaction tRNA(Met) + L-methionine + ATP = L-methionyl-tRNA(Met) + AMP + diphosphate. Its function is as follows. Is required not only for elongation of protein synthesis but also for the initiation of all mRNA translation through initiator tRNA(fMet) aminoacylation. The sequence is that of Methionine--tRNA ligase from Vibrio vulnificus (strain YJ016).